Here is a 216-residue protein sequence, read N- to C-terminus: Invasion protein InvF (216 aa).

In terms of domain architecture, HTH araC/xylS-type spans 112 to 210 (YWLVGYLLAQ…GVSPRKLSNI (99 aa)). DNA-binding regions (H-T-H motif) lie at residues 129–150 (RMLGEDYGVSYTHFRRLCSRAL) and 177–200 (ITQLAVNHGYSSPSHFSSEIKELI).

Transcriptional regulator required for the expression of several genes encoding type III secretion system SPI1 effector proteins. The interaction with SicA is necessary for the activation of sigDE (sopB pipC), sicAsipBCDA, and sopE. This Salmonella typhi protein is Invasion protein InvF (invF).